Here is a 329-residue protein sequence, read N- to C-terminus: Stimulator of interferon genes protein (329 aa).

Residues 1–4 lie on the Cytoplasmic side of the membrane; it reads MACV. Residues 5 to 25 form a helical membrane-spanning segment; that stretch reads LAIGSILFVWILGKGKYSGAQ. L26 is a topological domain (lumenal). Residues 27–52 traverse the membrane as a helical segment; that stretch reads IYRMATNFAISQGCCLVTCACELTEE. Topologically, residues 53 to 74 are cytoplasmic; that stretch reads IKHLHTRYNGHYWRALKASFNL. The helical transmembrane segment at 75 to 88 threads the bilayer; the sequence is SCAAFVTAILCYVF. The Lumenal segment spans residues 89-98; sequence YEPKLMASLP. Residues 99 to 116 traverse the membrane as a helical segment; it reads LTIDITLTLLSWLFCWIL. Topologically, residues 117-329 are cytoplasmic; it reads GIQGPTPATI…QQHSEEYSML (213 aa). The segment at 135-325 is cyclic dinucleotide-binding domain (CBD); it reads LNVAHGLAWS…KHIRQQHSEE (191 aa). Residues S144, Y149, R220, and T245 each coordinate 2',3'-cGAMP. Residues S144, Y149, 220–223, and T245 contribute to the 3',3'-c-di-GMP site; that span reads RVFK.

The protein belongs to the STING family. Homodimer; forms a homodimer in absence of cyclic nucleotide (c-di-GMP or cGAMP). Homotetramer; in presence of cyclic nucleotide (c-di-GMP or cGAMP), forms tetramers and higher-order oligomers through side-by-side packing.

The protein resides in the endoplasmic reticulum membrane. It localises to the cytoplasm. Its subcellular location is the perinuclear region. It is found in the endoplasmic reticulum-Golgi intermediate compartment membrane. The protein localises to the golgi apparatus membrane. The protein resides in the cytoplasmic vesicle. It localises to the autophagosome membrane. The catalysed reaction is H(+)(in) = H(+)(out). Its function is as follows. Sensor of cytosolic DNA from bacteria and viruses that promotes autophagy. Acts by recognizing and binding cyclic GMP-AMP (cGAMP), a messenger produced by CGAS in response to DNA in the cytosol. Exhibits guanine base-specific ligand recognition: binds 3'-3'linked cGAMP, 2'-3' linked cGAMP and 3'-3' linked c-di-GMP with much greater affinity as compared to 3'-3' linked c-di-AMP. Following cGAMP-binding, promotes the formation of autophagosomes, leading to target cytosolic DNA for degradation by the lysosome. Promotes autophagy by acting as a proton channel that directs proton efflux from the Golgi to facilitate LC3 lipidation. Lacks the C-terminal tail (CTT) found in other vertebrate orthologs which is essential for interferon signaling. The chain is Stimulator of interferon genes protein from Xenopus tropicalis (Western clawed frog).